A 699-amino-acid polypeptide reads, in one-letter code: SPS-sensor serine protease component SSY5 (699 aa).

2 disordered regions span residues 1–113 (MVRF…LQGF) and 128–158 (PVKEEESQDTQNTLDVSSSTSSTLATSENAR). Residues 1–381 (MVRFFGLNKK…YCVKDYIKKA (381 aa)) constitute a propeptide that is removed on maturation. A compositionally biased stretch (polar residues) spans 24–38 (NEQNAAETSSSNVSG). Residues 39 to 51 (NEERIDPNSHDTN) show a composition bias toward basic and acidic residues. Residues 61–78 (STTFGSSIQSSSIFSRGR) show a composition bias toward low complexity. Polar residues predominate over residues 83-93 (TGASSSMATSE). Low complexity-rich tracts occupy residues 97–109 (HSSGHSGSKNSKN) and 144–154 (SSSTSSTLATS). Residues 459–699 (FAITCAHVVL…QWDIDPQLDG (241 aa)) form a serine protease region. Residues histidine 465, aspartate 545, and serine 640 each act as charge relay system in the active site.

It belongs to the peptidase S64 family. In terms of assembly, component of the plasma membrane SPS (SSY1-PTR3-SSY5) amino acid sensor complex. Post-translationally, the propeptide is autoproteolytically cleaved from the catalytic domain but remains associated, forming an inactive protease complex. This processing occurs even in the absence of signaling.

The protein resides in the cell membrane. Protease component of the SPS-sensor system, which regulates the expression of several amino acid-metabolizing enzymes and amino acid- and peptide-permeases in response to extracellular amino acid levels by controlling the activity of two transcription factors, STP1 and STP2. Catalyzes the activation of these transcription factors, which are synthesized as latent cytoplasmic precursors, by proteolytic removal of an N-terminal inhibitory domain containing cytoplasmic retention motifs. SSY5 binds as an inactive protease complex to STP1. In response to extracellular amino acids and dependent on the other SPS-sensor components, the inhibitory propeptide is induced to dissociate, and thereby enables the catalytic domain to process STP1. This Saccharomyces cerevisiae (strain ATCC 204508 / S288c) (Baker's yeast) protein is SPS-sensor serine protease component SSY5 (SSY5).